The sequence spans 534 residues: Importin subunit alpha-1b (534 aa).

Residues 1 to 58 (MSLRPSERAEVRRSRYKVAVDADEGRRRREDNMVEIRKSRREESLLKKRRDGLPAAAA) enclose the IBB domain. 8 ARM repeats span residues 111-151 (SPPI…NIAS), 154-193 (SDNT…NVAG), 196-236 (PKCR…NFCR), 238-277 (KPQP…YLSD), 280-319 (NDKI…NIVT), 322-362 (DMQT…NITA), 365-404 (REQI…NATS), and 408-447 (HDQI…NILK). The interval 505–534 (DAMPSGDNAQNGFNFGNQQPNVPSGGFNFG) is disordered. Residues 514–523 (QNGFNFGNQQ) show a composition bias toward low complexity.

This sequence belongs to the importin alpha family. Forms a complex with importin subunit beta-1. The whole complex, most stable and composed of importin alpha and importin beta, is referred to as PTAC or pore targeting complex. As to expression, highly expressed in root and weakly in callus, etiolated leaf and green leaf.

Its subcellular location is the cytoplasm. It is found in the perinuclear region. In terms of biological role, functions in nuclear protein import. Binds specifically and directly to substrates containing either a simple or bipartite NLS motif. Promotes docking of import substrates to the nuclear envelope. In conjunction with importin beta-1, mediates the nuclear envelope docking, and the subsequent translocation into the nucleus of the constitutive morphogenetic 1 (COP1) protein containing bipartite NLS motif. This Oryza sativa subsp. japonica (Rice) protein is Importin subunit alpha-1b.